The sequence spans 257 residues: Imidazole glycerol phosphate synthase subunit HisF (257 aa).

Active-site residues include D12 and D131.

The protein belongs to the HisA/HisF family. In terms of assembly, heterodimer of HisH and HisF.

It localises to the cytoplasm. The enzyme catalyses 5-[(5-phospho-1-deoxy-D-ribulos-1-ylimino)methylamino]-1-(5-phospho-beta-D-ribosyl)imidazole-4-carboxamide + L-glutamine = D-erythro-1-(imidazol-4-yl)glycerol 3-phosphate + 5-amino-1-(5-phospho-beta-D-ribosyl)imidazole-4-carboxamide + L-glutamate + H(+). It functions in the pathway amino-acid biosynthesis; L-histidine biosynthesis; L-histidine from 5-phospho-alpha-D-ribose 1-diphosphate: step 5/9. Its function is as follows. IGPS catalyzes the conversion of PRFAR and glutamine to IGP, AICAR and glutamate. The HisF subunit catalyzes the cyclization activity that produces IGP and AICAR from PRFAR using the ammonia provided by the HisH subunit. The sequence is that of Imidazole glycerol phosphate synthase subunit HisF from Burkholderia lata (strain ATCC 17760 / DSM 23089 / LMG 22485 / NCIMB 9086 / R18194 / 383).